We begin with the raw amino-acid sequence, 229 residues long: Ribosome maturation factor RimM (229 aa).

The region spanning 148–229 is the PRC barrel domain; the sequence is ADEFYWVDLI…RVVVDWEADY (82 aa).

This sequence belongs to the RimM family. As to quaternary structure, binds ribosomal protein uS19.

The protein resides in the cytoplasm. In terms of biological role, an accessory protein needed during the final step in the assembly of 30S ribosomal subunit, possibly for assembly of the head region. Essential for efficient processing of 16S rRNA. May be needed both before and after RbfA during the maturation of 16S rRNA. It has affinity for free ribosomal 30S subunits but not for 70S ribosomes. The chain is Ribosome maturation factor RimM from Burkholderia pseudomallei (strain 1710b).